Reading from the N-terminus, the 64-residue chain is Large ribosomal subunit protein bL35 (64 aa).

Positions 18–39 (GSGLVKHYPSNKHHKNTHKKEN) are disordered. Residues 26–39 (PSNKHHKNTHKKEN) show a composition bias toward basic residues.

It belongs to the bacterial ribosomal protein bL35 family.

The polypeptide is Large ribosomal subunit protein bL35 (Symbiobacterium thermophilum (strain DSM 24528 / JCM 14929 / IAM 14863 / T)).